The primary structure comprises 195 residues: Recombination protein RecR (195 aa).

The C4-type zinc finger occupies 53–68 (CPVCFNIDVKSPCSIC). The Toprim domain occupies 76-171 (QLLCIVEELG…KVTRLACGIP (96 aa)).

The protein belongs to the RecR family.

Functionally, may play a role in DNA repair. It seems to be involved in an RecBC-independent recombinational process of DNA repair. It may act with RecF and RecO. The polypeptide is Recombination protein RecR (Ehrlichia chaffeensis (strain ATCC CRL-10679 / Arkansas)).